Consider the following 116-residue polypeptide: Phosphoribosyl-AMP cyclohydrolase (116 aa).

Aspartate 80 lines the Mg(2+) pocket. Zn(2+) is bound at residue cysteine 81. Mg(2+)-binding residues include aspartate 82 and aspartate 84. Cysteine 98 and cysteine 105 together coordinate Zn(2+).

It belongs to the PRA-CH family. Homodimer. It depends on Mg(2+) as a cofactor. Zn(2+) is required as a cofactor.

The protein localises to the cytoplasm. The enzyme catalyses 1-(5-phospho-beta-D-ribosyl)-5'-AMP + H2O = 1-(5-phospho-beta-D-ribosyl)-5-[(5-phospho-beta-D-ribosylamino)methylideneamino]imidazole-4-carboxamide. The protein operates within amino-acid biosynthesis; L-histidine biosynthesis; L-histidine from 5-phospho-alpha-D-ribose 1-diphosphate: step 3/9. Its function is as follows. Catalyzes the hydrolysis of the adenine ring of phosphoribosyl-AMP. This chain is Phosphoribosyl-AMP cyclohydrolase, found in Trichormus variabilis (strain ATCC 29413 / PCC 7937) (Anabaena variabilis).